The following is a 1295-amino-acid chain: MMEILRGSPALSAFRINKLLARFQAANLQVHNIYAEYVHFADLNAPLNDSEQAQLTRLLQYGPALSSHTPAGKLLLVTPRPGTISPWSSKATDIAHNCGLQQVDRLERGVAYYIEASTLTAEQWRQVAAELHDRMMETVFSSLTDAEKLFIHHQPAPVSSVDLLGEGRQALIDANLRLGLALAEDEIDYLQEAFTKLGRNPNDIELYMFAQANSEHCRHKIFNADWIIDGKPQPKSLFKMIKNTFETTPDYVLSAYKDNAAVMEGSAVGRYFADHNTGRYDFHQEPAHILMKVETHNHPTAISPWPGAATGSGGEIRDEGATGRGAKPKAGLVGFSVSNLRIPGFEQPWEEDFGKPERIVTALDIMTEGPLGGAAFNNEFGRPALTGYFRTYEEKVNSHNGEELRGYHKPIMLAGGIGNIRADHVQKGEIVVGAKLIVLGGPAMNIGLGGGAASSMASGQSDADLDFASVQRDNPEMERRCQEVIDRCWQLGDANPILFIHDVGAGGLSNAMPELVSDGGRGGKFELRDILSDEPGMSPLEIWCNESQERYVLAVAADQLPLFDELCKRERAPYAVIGDATEEQHLSLHDNHFDNQPIDLPLDVLLGKTPKMTRDVQTLKAKGDALNRADITIADAVKRVLHLPTVAEKTFLVTIGDRTVTGMVARDQMVGPWQVPVADCAVTTASLDSYYGEAMSIGERAPVALLDFAASARLAVGEALTNIAATQIGDIKRIKLSANWMAAAGHPGEDAGLYDAVKAVGEELCPQLGLTIPVGKDSMSMKTRWQEGNEQREMTSPLSLVISAFARVEDVRHTLTPQLSTEDNALLLIDLGKGHNALGATALAQVYRQLGDKPADVRDVAQLKGFYDAMQALVAARKLLAWHDRSDGGLLVTLAEMAFAGHCGVQVDIAALGDDHLAALFNEELGGVIQVRAEDRDAVEALLAQYGLADCVHYLGQALAGDRFVITANDQTVFSESRTTLRVWWAETTWQMQRLRDNPQCADQEHEAKANDTDPGLNVKLSFDINEDIAAPYIATGARPKVAVLREQGVNSHVEMAAAFHRAGFDAIDVHMSDLLGGRIGLGNFHALVACGGFSYGDVLGAGEGWAKSILFNHRVRDEFETFFHRPQTLALGVCNGCQMMSNLRELIPGSELWPRFVRNHSDRFEARFSLVEVTQSPSLLLQGMVGSQMPIAVSHGEGRVEVRDDAHLAALESKGLVALRYVDNFGKVTETYPANPNGSPNGITAVTTENGRVTIMMPHPERVFRTVANSWHPENWGEDSPWMRIFRNARKQLG.

Residues 305-327 are disordered; sequence WPGAATGSGGEIRDEGATGRGAK. ATP is bound by residues 307 to 318, 386 to 388, and Ala678; these read GAATGSGGEIRD and TGY. Residues Asp679, Glu718, Asn722, and Asp884 each coordinate Mg(2+). ATP is bound at residue Ser886. The Glutamine amidotransferase type-1 domain maps to 1042–1295; sequence VAVLREQGVN…IFRNARKQLG (254 aa). Residue Cys1135 is the Nucleophile of the active site. Residues His1260 and Glu1262 contribute to the active site.

In the N-terminal section; belongs to the FGAMS family. Monomer.

The protein localises to the cytoplasm. The enzyme catalyses N(2)-formyl-N(1)-(5-phospho-beta-D-ribosyl)glycinamide + L-glutamine + ATP + H2O = 2-formamido-N(1)-(5-O-phospho-beta-D-ribosyl)acetamidine + L-glutamate + ADP + phosphate + H(+). It participates in purine metabolism; IMP biosynthesis via de novo pathway; 5-amino-1-(5-phospho-D-ribosyl)imidazole from N(2)-formyl-N(1)-(5-phospho-D-ribosyl)glycinamide: step 1/2. Functionally, phosphoribosylformylglycinamidine synthase involved in the purines biosynthetic pathway. Catalyzes the ATP-dependent conversion of formylglycinamide ribonucleotide (FGAR) and glutamine to yield formylglycinamidine ribonucleotide (FGAM) and glutamate. The sequence is that of Phosphoribosylformylglycinamidine synthase from Salmonella typhimurium (strain LT2 / SGSC1412 / ATCC 700720).